A 69-amino-acid chain; its full sequence is UPF0337 protein RB0906 (69 aa).

It belongs to the UPF0337 (CsbD) family.

The protein is UPF0337 protein RB0906 of Rhizobium meliloti (strain 1021) (Ensifer meliloti).